A 274-amino-acid polypeptide reads, in one-letter code: Ceramide synthase (274 aa).

Residues 34-261 (ADAVIVSARL…ICRGACRLFW (228 aa)) enclose the TLC domain. Helical transmembrane passes span 130–150 (FLMV…SVVW), 159–179 (LGCM…KILI), 194–214 (ALML…LYWA), and 223–243 (LLAV…LLLA).

Expressed in testis. Expressed in the retina with higher expression levels in the macular than in the peripheral region.

It localises to the golgi apparatus membrane. The protein resides in the endoplasmic reticulum membrane. The enzyme catalyses sphing-4-enine + octadecanoyl-CoA = N-octadecanoylsphing-4-enine + CoA + H(+). It carries out the reaction eicosanoyl-CoA + sphing-4-enine = N-eicosanoyl-sphing-4-enine + CoA + H(+). It catalyses the reaction sphing-4-enine + hexadecanoyl-CoA = N-hexadecanoylsphing-4-enine + CoA + H(+). In terms of biological role, involved in ceramide synthesis. The chain is Ceramide synthase from Homo sapiens (Human).